The sequence spans 156 residues: Putative pre-16S rRNA nuclease (156 aa).

This sequence belongs to the YqgF nuclease family.

It localises to the cytoplasm. Functionally, could be a nuclease involved in processing of the 5'-end of pre-16S rRNA. The polypeptide is Putative pre-16S rRNA nuclease (Ehrlichia ruminantium (strain Welgevonden)).